A 368-amino-acid chain; its full sequence is MHIYKVGGAVRDRLLGRPVSDIDWLVVGATVEEMLANGYRPVGADFPVFLHPKTGEEYALARTERKSGRGYGGFTFHASPDVTLEEDLIRRDLTINAMAEDEAGTVYDPYQGKNDLDQRLLRHVSPAFAEDPLRVLRVARFAARYAPLGFRVADETLALMRQISASGELQALTAERSWKEIERALMEVQPQVFFKVLSACGALQELLPELDDGSRTLAALEQAAAHEQPLNVRWACLLRGLPPTSIKAVNQRLKAPRECQELAMLTGECLAQGNQALELPATALLELLQKFDVYRRPQRFEDFLTVCEMAARGDGEQGYPQADYLRGAAAAARAVDVKPLVQAGLTGQALGEALKGERLKALEAYQRG.

The ATP site is built by Gly8 and Arg11. The CTP site is built by Gly8 and Arg11. Residues Asp21 and Asp23 each contribute to the Mg(2+) site. 3 residues coordinate ATP: Arg91, Arg137, and Arg140. Residues Arg91, Arg137, and Arg140 each contribute to the CTP site.

The protein belongs to the tRNA nucleotidyltransferase/poly(A) polymerase family. Bacterial CCA-adding enzyme type 1 subfamily. As to quaternary structure, monomer. Can also form homodimers and oligomers. Mg(2+) is required as a cofactor. The cofactor is Ni(2+).

It catalyses the reaction a tRNA precursor + 2 CTP + ATP = a tRNA with a 3' CCA end + 3 diphosphate. It carries out the reaction a tRNA with a 3' CCA end + 2 CTP + ATP = a tRNA with a 3' CCACCA end + 3 diphosphate. Functionally, catalyzes the addition and repair of the essential 3'-terminal CCA sequence in tRNAs without using a nucleic acid template. Adds these three nucleotides in the order of C, C, and A to the tRNA nucleotide-73, using CTP and ATP as substrates and producing inorganic pyrophosphate. tRNA 3'-terminal CCA addition is required both for tRNA processing and repair. Also involved in tRNA surveillance by mediating tandem CCA addition to generate a CCACCA at the 3' terminus of unstable tRNAs. While stable tRNAs receive only 3'-terminal CCA, unstable tRNAs are marked with CCACCA and rapidly degraded. This chain is Multifunctional CCA protein, found in Pseudomonas putida (strain ATCC 47054 / DSM 6125 / CFBP 8728 / NCIMB 11950 / KT2440).